The following is a 397-amino-acid chain: Mediator of RNA polymerase II transcription subunit 3 (397 aa).

Position 1 is an N-acetylmethionine (Met-1). The span at 147-165 (ASTPTTTATPHANPITHAH) shows a compositional bias: low complexity. Disordered regions lie at residues 147–227 (ASTP…AQAQ), 288–327 (SMGA…QSQL), and 346–370 (FQQQ…MGMN). Composition is skewed to polar residues over residues 166–178 (SLSN…TMQH) and 189–202 (SGST…HNST). Residues 211–223 (KKPRKPRQTKKAK) show a composition bias toward basic residues. A compositionally biased stretch (polar residues) spans 290-303 (GAQNQGGQVSMSQF). A compositionally biased stretch (low complexity) spans 309–322 (GSNPNTNTNSNNTP).

The protein belongs to the mediator complex subunit 3 family. In terms of assembly, component of the Mediator complex, which is composed of at least 21 subunits that form three structurally distinct submodules. The Mediator head module contains MED6, MED8, MED11, SRB4/MED17, SRB5/MED18, ROX3/MED19, SRB2/MED20 and SRB6/MED22, the middle module contains MED1, MED4, NUT1/MED5, MED7, CSE2/MED9, NUT2/MED10, SRB7/MED21 and SOH1/MED31, and the tail module contains MED2, PGD1/MED3, RGR1/MED14, GAL11/MED15 and SIN4/MED16. The head and the middle modules interact directly with RNA polymerase II, whereas the elongated tail module interacts with gene-specific regulatory proteins. PGD1/MED3 interacts directly with the CYC8-TUP1 corepressor proteins.

The protein resides in the nucleus. Its function is as follows. Component of the Mediator complex, a coactivator involved in the regulated transcription of nearly all RNA polymerase II-dependent genes. Mediator functions as a bridge to convey information from gene-specific regulatory proteins to the basal RNA polymerase II transcription machinery. The Mediator complex, having a compact conformation in its free form, is recruited to promoters by direct interactions with regulatory proteins and serves for the assembly of a functional preinitiation complex with RNA polymerase II and the general transcription factors. The Mediator complex unfolds to an extended conformation and partially surrounds RNA polymerase II, specifically interacting with the unphosphorylated form of the C-terminal domain (CTD) of RNA polymerase II. The Mediator complex dissociates from the RNA polymerase II holoenzyme and stays at the promoter when transcriptional elongation begins. PGD1/MED3 is also involved in direct repeat recombination. This chain is Mediator of RNA polymerase II transcription subunit 3 (PGD1), found in Saccharomyces cerevisiae (strain ATCC 204508 / S288c) (Baker's yeast).